The primary structure comprises 957 residues: Glycine dehydrogenase (decarboxylating) (957 aa).

At lysine 708 the chain carries N6-(pyridoxal phosphate)lysine.

Belongs to the GcvP family. As to quaternary structure, the glycine cleavage system is composed of four proteins: P, T, L and H. Pyridoxal 5'-phosphate is required as a cofactor.

The enzyme catalyses N(6)-[(R)-lipoyl]-L-lysyl-[glycine-cleavage complex H protein] + glycine + H(+) = N(6)-[(R)-S(8)-aminomethyldihydrolipoyl]-L-lysyl-[glycine-cleavage complex H protein] + CO2. Functionally, the glycine cleavage system catalyzes the degradation of glycine. The P protein binds the alpha-amino group of glycine through its pyridoxal phosphate cofactor; CO(2) is released and the remaining methylamine moiety is then transferred to the lipoamide cofactor of the H protein. This chain is Glycine dehydrogenase (decarboxylating), found in Klebsiella pneumoniae subsp. pneumoniae (strain ATCC 700721 / MGH 78578).